The chain runs to 77 residues: Large ribosomal subunit protein uL29 (77 aa).

This sequence belongs to the universal ribosomal protein uL29 family.

This is Large ribosomal subunit protein uL29 from Mycobacterium sp. (strain JLS).